Reading from the N-terminus, the 439-residue chain is Ribosomal protein uS12 methylthiotransferase RimO (439 aa).

The MTTase N-terminal domain occupies 3-115 (KKLHLISLGC…IDQMVRERQG (113 aa)). [4Fe-4S] cluster-binding residues include Cys12, Cys46, Cys78, Cys147, Cys151, and Cys154. Residues 133–362 (TGSSVHAYVK…DKIIQKQHRA (230 aa)) form the Radical SAM core domain.

It belongs to the methylthiotransferase family. RimO subfamily. The cofactor is [4Fe-4S] cluster.

It is found in the cytoplasm. It catalyses the reaction L-aspartate(89)-[ribosomal protein uS12]-hydrogen + (sulfur carrier)-SH + AH2 + 2 S-adenosyl-L-methionine = 3-methylsulfanyl-L-aspartate(89)-[ribosomal protein uS12]-hydrogen + (sulfur carrier)-H + 5'-deoxyadenosine + L-methionine + A + S-adenosyl-L-homocysteine + 2 H(+). Its function is as follows. Catalyzes the methylthiolation of an aspartic acid residue of ribosomal protein uS12. This chain is Ribosomal protein uS12 methylthiotransferase RimO, found in Wolinella succinogenes (strain ATCC 29543 / DSM 1740 / CCUG 13145 / JCM 31913 / LMG 7466 / NCTC 11488 / FDC 602W) (Vibrio succinogenes).